The following is an 82-amino-acid chain: Putative membrane protein insertion efficiency factor (82 aa).

The protein belongs to the UPF0161 family.

The protein localises to the cell membrane. Its function is as follows. Could be involved in insertion of integral membrane proteins into the membrane. The chain is Putative membrane protein insertion efficiency factor from Streptococcus thermophilus (strain ATCC BAA-491 / LMD-9).